The following is a 551-amino-acid chain: Pyrroline-5-carboxylate reductase 1 (551 aa).

Residues 279 to 551 (LYTQKQQNKK…RHEVKTEQIN (273 aa)) form a disordered region. Low complexity-rich tracts occupy residues 282–298 (QKQQNKKQQQLKQQQHQ), 306–342 (QQHQQQVQQQEPHQYQQQQQQSHQQSQYNQGHNYGHQ), 383–415 (QQYQQHQQPTQQESQEQTQQPEQTQSTNQSNQR), 424–441 (KSPQKQPQKQSQVQQPSS), 448–475 (QQQQQQPPQEQQQQQEQPQQPQEQQQQP), 487–496 (QQQQPQQQQQ), and 503–520 (YNNNRRGGRHYSYNNNYN). A compositionally biased stretch (basic and acidic residues) spans 537–551 (YHDEKRHEVKTEQIN).

Belongs to the pyrroline-5-carboxylate reductase family. As to quaternary structure, homodecamer; composed of 5 homodimers.

It carries out the reaction L-proline + NADP(+) = (S)-1-pyrroline-5-carboxylate + NADPH + 2 H(+). The enzyme catalyses L-proline + NAD(+) = (S)-1-pyrroline-5-carboxylate + NADH + 2 H(+). Its pathway is amino-acid biosynthesis; L-proline biosynthesis; L-proline from L-glutamate 5-semialdehyde: step 1/1. The polypeptide is Pyrroline-5-carboxylate reductase 1 (pycr1) (Dictyostelium discoideum (Social amoeba)).